The primary structure comprises 614 residues: MGGSNLHSAWAQLFVRALAQAGVRDLVLCPGSRSTPLAIAAMESEEVRCHSVVDERAAAFFALGQARVTGRPSVFVCTSGTAGAHALPAIIEAHQSFTPLIAITADRPWELADAAAAQTIDQTKLFGDHVRHFAELGLPDPSPLALRAVTRIAAQAVTRALSPTPGAVHINARFRKPLEPVDATGPEPWQAEWEALMRRAGTRVVSARAGVDGRAIEELAARCARAERGLIVCGPAESREDDARARRAVLALSRATGFPVLAEGTSQICFGGLTEGVVMPASFDSFLRAPEFRAANAPDLILELGAPPTSAGYATYIAEHASARRVVVSSHGWNDPTSAAAALVMGEPVEVCEALAARLGGAALSLGRGRRDWAATFARAGEIAAGHAARACAGDELTEGAIARMVASACPAGSLLAIGNSMPVRDLDTYCPPSARALRVLHQRGASGIDGLVSAAAGARVAAAAPVTLLLGDLSLLHDLTGLLLAAKATGDGRAPLVIVVVQNDGGRIFEHLPIARRGAALLERCFTMPQHLDFAPAAAMFGLAYERAGTAGELARALAAGYQRAGATLIEAVVPPHDGAARVARLWSDVRRDVAALGSAPAADGAAADLQTP.

This sequence belongs to the TPP enzyme family. MenD subfamily. In terms of assembly, homodimer. It depends on Mg(2+) as a cofactor. Mn(2+) is required as a cofactor. Requires thiamine diphosphate as cofactor.

The catalysed reaction is isochorismate + 2-oxoglutarate + H(+) = 5-enolpyruvoyl-6-hydroxy-2-succinyl-cyclohex-3-ene-1-carboxylate + CO2. It participates in quinol/quinone metabolism; 1,4-dihydroxy-2-naphthoate biosynthesis; 1,4-dihydroxy-2-naphthoate from chorismate: step 2/7. It functions in the pathway quinol/quinone metabolism; menaquinone biosynthesis. Its function is as follows. Catalyzes the thiamine diphosphate-dependent decarboxylation of 2-oxoglutarate and the subsequent addition of the resulting succinic semialdehyde-thiamine pyrophosphate anion to isochorismate to yield 2-succinyl-5-enolpyruvyl-6-hydroxy-3-cyclohexene-1-carboxylate (SEPHCHC). The sequence is that of 2-succinyl-5-enolpyruvyl-6-hydroxy-3-cyclohexene-1-carboxylate synthase from Sorangium cellulosum (strain So ce56) (Polyangium cellulosum (strain So ce56)).